The following is a 356-amino-acid chain: Magnesium-chelatase subunit ChlI (356 aa).

Residue 47–54 coordinates ATP; it reads GDRGTGKS.

It belongs to the Mg-chelatase subunits D/I family.

It is found in the plastid. It localises to the chloroplast. The catalysed reaction is protoporphyrin IX + Mg(2+) + ATP + H2O = Mg-protoporphyrin IX + ADP + phosphate + 3 H(+). It functions in the pathway porphyrin-containing compound metabolism; chlorophyll biosynthesis. In terms of biological role, involved in chlorophyll biosynthesis; introduces a magnesium ion into protoporphyrin IX to yield Mg-protoporphyrin IX. This is Magnesium-chelatase subunit ChlI (chlI) from Porphyra purpurea (Red seaweed).